Reading from the N-terminus, the 989-residue chain is ATP-dependent 6-phosphofructokinase subunit alpha (989 aa).

Residues 1–585 form an N-terminal catalytic PFK domain 1 region; that stretch reads MPEPSISALS…SYESFLSVSK (585 aa). Residues G220, 283-284, and 313-316 each bind ATP; these read RS and GDGS. D314 contacts Mg(2+). Beta-D-fructose 6-phosphate contacts are provided by residues 359–361, R396, 403–405, E460, R487, and 493–496; these read SID, MGR, and HVQR. D361 serves as the catalytic Proton acceptor. The interdomain linker stretch occupies residues 586–599; sequence YDDGSYLVPESSRL. The segment at 600-989 is C-terminal regulatory PFK domain 2; it reads NIAIIHVGAP…LSGRLSIRTT (390 aa). Beta-D-fructose 2,6-bisphosphate is bound by residues R670, 727 to 731, R765, 772 to 774, E832, R858, 864 to 867, and R963; these read TVSNN, QGG, and HVQQ.

This sequence belongs to the phosphofructokinase type A (PFKA) family. ATP-dependent PFK group I subfamily. Eukaryotic two domain clade 'E' sub-subfamily. In terms of assembly, heterododecamer of 4 alpha, 4 beta and 4 gamma chains. The gamma chain bridges the N-terminal halves of the alpha and beta subunits. The cofactor is Mg(2+).

The protein localises to the cytoplasm. The enzyme catalyses beta-D-fructose 6-phosphate + ATP = beta-D-fructose 1,6-bisphosphate + ADP + H(+). It participates in carbohydrate degradation; glycolysis; D-glyceraldehyde 3-phosphate and glycerone phosphate from D-glucose: step 3/4. Allosterically activated by ADP, AMP, or fructose 2,6-bisphosphate, and allosterically inhibited by ATP or citrate. Its function is as follows. Catalyzes the phosphorylation of D-fructose 6-phosphate to fructose 1,6-bisphosphate by ATP, the first committing step of glycolysis. Involved in the modulation of glucose-induced microautophagy of peroxisomes independent of its ability to metabolize glucose intermediates. This is ATP-dependent 6-phosphofructokinase subunit alpha (PFK1) from Komagataella phaffii (strain GS115 / ATCC 20864) (Yeast).